Here is a 228-residue protein sequence, read N- to C-terminus: uncharacterized protein (228 aa).

A run of 5 helical transmembrane segments spans residues 14-34 (HTISIFLGYLLMGMTFGMLLA), 42-62 (VALFMSLFIYAGAIQFVAITL), 130-150 (FMFSISLLNHSYWIFGSLVGS), 156-176 (FSFDTQGMEFVMTAIFIVLFM), and 192-212 (IAIAVVCLALFGTEYFLLIAL).

It belongs to the AzlC family.

The protein resides in the cell membrane. This is an uncharacterized protein from Helicobacter pylori (strain J99 / ATCC 700824) (Campylobacter pylori J99).